A 302-amino-acid polypeptide reads, in one-letter code: MTLPPLSHLDRLEAESIHILREVAAEFRAPVMLYSVGKDSSVLLHLLLKAFAPSPPPIPLLHVDTRWKFREMIAFRDRRAAETAVDLRVHINPEGVAQDIGPISHGAAVHTDVMKTQGLKQALEQGGFDAAIGGARRDEEKSRAKERVFSFRNARHRWDPKNQRPELWNLYNARTKPGESVRVFPLSNWTELDIWLYIYRERIPVVPLYFAAPRPVVQRDGAWIMVDDDRLPLHPGETPQLRSVRFRTLGCYPLTGAIESTADTLEAVIAEMLVSTSSERQGRMIDHAPGASMEQKKLEGYF.

This sequence belongs to the PAPS reductase family. CysD subfamily. As to quaternary structure, heterodimer composed of CysD, the smaller subunit, and CysN.

It carries out the reaction sulfate + ATP + H(+) = adenosine 5'-phosphosulfate + diphosphate. It functions in the pathway sulfur metabolism; hydrogen sulfide biosynthesis; sulfite from sulfate: step 1/3. In terms of biological role, with CysN forms the ATP sulfurylase (ATPS) that catalyzes the adenylation of sulfate producing adenosine 5'-phosphosulfate (APS) and diphosphate, the first enzymatic step in sulfur assimilation pathway. APS synthesis involves the formation of a high-energy phosphoric-sulfuric acid anhydride bond driven by GTP hydrolysis by CysN coupled to ATP hydrolysis by CysD. The chain is Sulfate adenylyltransferase subunit 2 from Xanthomonas campestris pv. campestris (strain 8004).